A 250-amino-acid chain; its full sequence is Aquaporin TIP1-1 (250 aa).

Helical transmembrane passes span 24–44 and 56–76; these read FAEF…GMAF and AGLI…VSVG. The NPA 1 motif lies at 85-87; the sequence is NPA. The next 3 helical transmembrane spans lie at 104–126, 143–163, and 172–192; these read LLYW…FSTG, ALVL…ATAV, and TIAP…GGAF. The NPA 2 motif lies at 198–200; it reads NPA. A helical membrane pass occupies residues 218 to 238; sequence YWVGPLIGGGLAGVIYELLFI.

Belongs to the MIP/aquaporin (TC 1.A.8) family. TIP (TC 1.A.8.10) subfamily. In terms of tissue distribution, expressed in roots, shoots, leaves, tassels, ears and embryos. Expressed in meristems and zones of cell enlargement: tips of primary and lateral roots, leaf primordia, and male and female inflorescence meristems. Highly expressed in the root epidermis and endodermis, parenchyma cells surrounding mature xylem vessels in the root and the stem, phloem companion cells and a ring of cells around the phloem strand in the stem and the leaf sheath, and the basal endosperm transfer cells in developing kernels.

The protein resides in the vacuole membrane. Its function is as follows. Water channel required to facilitate the transport of water across cell membrane. May support the rapid influx of water into vacuoles during cell expansion, permit osmotic equilibration between the cytosol and the vacuolar content and rapid transcellular water flow through living cells. Its function is impaired by Hg(2+). The sequence is that of Aquaporin TIP1-1 (TIP1-1) from Zea mays (Maize).